A 90-amino-acid polypeptide reads, in one-letter code: MGRTVNCIKLGRELEGLDFPPYPGELGKRIFENVSKEAWAGWIRHQTMLVNEYHLNLSDIKARKYLAEQLDAYFFGSGAEQPRGYVPLAK.

It belongs to the Fe(2+)-trafficking protein family.

In terms of biological role, could be a mediator in iron transactions between iron acquisition and iron-requiring processes, such as synthesis and/or repair of Fe-S clusters in biosynthetic enzymes. The protein is Probable Fe(2+)-trafficking protein of Nitrosospira multiformis (strain ATCC 25196 / NCIMB 11849 / C 71).